The sequence spans 436 residues: 3-phosphoshikimate 1-carboxyvinyltransferase (436 aa).

3-phosphoshikimate is bound by residues K22, S23, and R27. Residue K22 participates in phosphoenolpyruvate binding. Residues G95 and R123 each coordinate phosphoenolpyruvate. The 3-phosphoshikimate site is built by S170, S171, Q172, S201, D322, and K349. Q172 contacts phosphoenolpyruvate. D322 serves as the catalytic Proton acceptor. Phosphoenolpyruvate-binding residues include R353, R397, and K422.

It belongs to the EPSP synthase family. As to quaternary structure, monomer.

It localises to the cytoplasm. The catalysed reaction is 3-phosphoshikimate + phosphoenolpyruvate = 5-O-(1-carboxyvinyl)-3-phosphoshikimate + phosphate. It functions in the pathway metabolic intermediate biosynthesis; chorismate biosynthesis; chorismate from D-erythrose 4-phosphate and phosphoenolpyruvate: step 6/7. In terms of biological role, catalyzes the transfer of the enolpyruvyl moiety of phosphoenolpyruvate (PEP) to the 5-hydroxyl of shikimate-3-phosphate (S3P) to produce enolpyruvyl shikimate-3-phosphate and inorganic phosphate. The polypeptide is 3-phosphoshikimate 1-carboxyvinyltransferase (Ralstonia nicotianae (strain ATCC BAA-1114 / GMI1000) (Ralstonia solanacearum)).